The following is a 72-amino-acid chain: uncharacterized protein (72 aa).

This is an uncharacterized protein from Acidianus filamentous virus 2 (isolate Italy/Pozzuoli) (AFV-2).